A 424-amino-acid chain; its full sequence is Probable serine/threonine-protein kinase PBL12 (424 aa).

Positions 88–368 (FSRSNMLGEG…CEVVKVLESI (281 aa)) constitute a Protein kinase domain. Residues 94–102 (LGEGGFGPV) and K123 contribute to the ATP site. The Proton acceptor role is filled by D218.

The protein belongs to the protein kinase superfamily. Ser/Thr protein kinase family. Expressed specifically in roots.

The protein localises to the cell membrane. The enzyme catalyses L-seryl-[protein] + ATP = O-phospho-L-seryl-[protein] + ADP + H(+). It catalyses the reaction L-threonyl-[protein] + ATP = O-phospho-L-threonyl-[protein] + ADP + H(+). May play a role in the signal transduction pathway of osmotic stress. May be involved in plant defense signaling. The chain is Probable serine/threonine-protein kinase PBL12 from Arabidopsis thaliana (Mouse-ear cress).